We begin with the raw amino-acid sequence, 3004 residues long: MKETDKIKSEVLNLMQLDGKREHINKNNKLYRKVIINPTSEDDLQKFCKNYFRIYQFSLYNFIRRLISLDAVIVYTLFMTVYIFSEISQGITKKYLFVDTAISLFLNIGILVVIESLFELKLLKDIKNANSQHYLRIVPKMSYFEKVMTKDIKVGNIIRVFQGEEFPADVVILYSKKNTNAVVDSFKIDGLYNKSIKYPVEKYKIDRDYLKMLSEINGVIKCELPNKNVFCFQGTYKLDKHPRSLHLSYENFALQSSILKGAEYIDGVVVYTGADTKKNLNIPRKIEENMTFCIKMNNVVYYLIFMYILFVLLSIIIKAIFYRKGKLLENSNDTFFTVLEDFIGLYILVLPVMLYSEKSLIYIIQSLKIERDTRMNKDENSNNTKVFNKNKNDALGTVDIIATARNGVLVNKKEILVSCTINNVLYSKKKFIISDEFLKLPSLNILDAERTNVSELLNLDERIFKDPENIFFPSRDFNNFLKILGNNTNPIYDPINGDFSKILKEIYRNYLNEEFLYKKIKLSSSVKSLLDNGYNQFLEDCESSYDCKEIIEDGLKNNEQSEKIEEFILGICACNRIIIYNEKFGDIEMKDNINEKSTSEHMNYDKDREVENIESENKYAVDSDGEENMNTIEHEDICLFNTSKNIGFHIYCYKKCLFFYNLKNICKEYYIICFHDFLRSNNYTMCILKNKKELDKGILYIRGYDFNILPYLCKNKNDINKIKKTIKIHTANYLKVILICKKNITNEDIAKYIYLKSVRSKFSFKFFDIIKTFFLYDLECIGIIGLKNDLNDGVVETFNDINNFDIRSWIFTNDSSKNTYLTALQCNLITPNSNLFIINFLNPDHSDEETVANYLFNNFLFSMENMKSRSYAIAINEMSLKNIMRSRYALKVFLCIIMRATVVLFCKLNNETKGKIISKFLSYTTPKLTVLGVGSTLNDAYLLKNTTISVCLTLNKQVNALYSISDYAMEEFKYVGELLILGRLNRFSLCRAFLWIIYLKVMIGSFYFFHNFDNFFSGSSISSILYSQTAFAIFHYSLIVAFASYEIDIPYKFIRNFPYIYQLARRKYFLNNTIIFLNIVESIFSSFISYYILRGNLFNLITHRKFTFHIFVLNFFLISEKILLFSKTWHIFFFIMTIIIVSILFIYINIYTLVDCLITGKCEFSLFDPEDSYFWISLLPILYINFIIDKFMKFVKNKIYPDITYHLSNTLKIETQEKFATNNKREEVITDKNIEKLAPVPKSYIIKEDNAYYGKSKKNKYIFDTLRKIIDIKIKYRNQQLNLEYKTYEKRNKLKLRIIILLLFIIFLITFTIQIIISKFIEKKLHSLSYLTVIYYIVAVLYLIKILIRNKTNYTYFYIIGKLLLVIGYLLEISENSVNNIINMLVTYSFTVCYIFFISFKILEGLVMCIIILSIAIWVYYHKNNNLNAMCTDFCDNPYTSLDNLEYINISCICKQQIFTFLICTLSFTLICLFMKYYEIYYLKKKFLTRYKQKVNLGKQIEILHTMLPSFLVEYLLVSDPKADGIMVGKNISGEDRGIISVIFCDIDDFQTMVSTLEPHTLVQTLDNLYLYFDKCIKYFNCIKIETVFESYLAASGLSEKKNNCVHKIKYDTKCAIKMAIAQLSAKYYISYKVLDTLSNNKDSNSIFPIESKYIYKNISLRIGIHTGKAISGVIGSVKPQYSLFGDTVNTASRMKSTSLKDHIHVSYDTYKYLKDDKTLVWKERSIFIKGKGEMKTYLLVDILDNSKKDHTKALEESTSSIFRSNDEIVNKSELITKEKEFDKIEMPDKSEIIDETKKIFKKSEKPSTKKKKIKKENAKEKNINIKMKEMGEILNNYDKEKVYNCNKSDDGSNSIGQNDFLYSTKNYNYKKSKYLDLERLSTNKSFRRNVLAYNFESPINLPPKIGDNTKRNYDSDNFFTSPYIIDKNEKDEIRDTTNKALYIKKSKNIINRMREDSIDFKDEFSKENDKIKEYIKERITYRQKVTPNYFNFNNMSKYSNAFKKKKKKKKDIQKKYTYRQKTSFYNFLNKNDIINYNYSSEFEYFIDPKMKNKKPINFNNLFAKIYKKKLSLLNIKNEPINIKKKNIKNKSRDRIIFSSRRDEEHDDNQKMNKKLFSRTYAQKAEQTSHENIFTEMINDNFLKKEDKEQCEIRNENRCPTVFLIKRNKTTININKNRVLKRIFKDIITRKKIKRNRILKNKKLNYVNKNDNLGKKYEILNNICLVHKRAMTFVQYNTEDEEKKRTKRFHKNDEIFGSDMNISRNLNGSNSNIQNINRRSKNKAEDDLFIRNKVNLNNIKNNINLRKNIYKTDERGMQYNDLKGYDKKKNTEENNEDKEKKIEYDSNENIKNGFPKNEDKMIMKKRMISKRISFYSLKEYEKGDSFKSYDNSSCGIKSKKTNSIISDEEMNEYFNYNTEFNSNRNKNKQNKEFSLASKVNNIFKNIFKKNYISDKLKSGKYNTMSNSKSGQTNITTDNKKSQIKKNGDVNKANTNVSNKNSDFVTNFDNYNKNILKKLTSTLQINRKTSYFNRFYYKFKDEELEEEYTREYYQEIINIDLTKKLIIIFVISELILSLCNVIELSYYENKETPNDFIVIIWLIRSIYLFTITFIWLLLKTKLKEYKDNSSKMMWTTFILNIFLSSWGIIMIDLACIHYSNLVGNSRERSIFFMKDATELIISMQLIFVKNMLFKHKFFFFVFFFVFLMYSFFKLFVIHVCELRICCSILLILSINILYFWYSEYLDRTQYIIKRKRNRMERTSHDFLTRILPRQVLEEYQNDNLQLTYKHEKIAFLFADIVGFTKWSKTAAPKNVLKLLQKLISKIDKDTIKLGLYKLFTIGDAYVATSQPNASITDQTEAADGIISIFKLAKLILHNINTIKIQFNKHDFNMRIGLHYGSCVGGIIGSVRIRYDMWGLDVLIANHIESNGIPGEIVCSEQFKNFFLENEPHAKLNFWHYKTISINDKDIKIYVVEDKNYEEDYDPKIINYETLLKLREQNKVKG.

The Cytoplasmic segment spans residues 1-66 (MKETDKIKSE…FSLYNFIRRL (66 aa)). The chain crosses the membrane as a helical span at residues 67 to 87 (ISLDAVIVYTLFMTVYIFSEI). The Extracellular portion of the chain corresponds to 88 to 94 (SQGITKK). A helical transmembrane segment spans residues 95–115 (YLFVDTAISLFLNIGILVVIE). Topologically, residues 116 to 300 (SLFELKLLKD…TFCIKMNNVV (185 aa)) are cytoplasmic. A helical transmembrane segment spans residues 301–321 (YYLIFMYILFVLLSIIIKAIF). Topologically, residues 322-334 (YRKGKLLENSNDT) are extracellular. A glycan (N-linked (GlcNAc...) asparagine) is linked at asparagine 332. A helical transmembrane segment spans residues 335–355 (FFTVLEDFIGLYILVLPVMLY). Residues 356 to 991 (SEKSLIYIIQ…GRLNRFSLCR (636 aa)) lie on the Cytoplasmic side of the membrane. Residues 992 to 1012 (AFLWIIYLKVMIGSFYFFHNF) form a helical membrane-spanning segment. The Extracellular portion of the chain corresponds to 1013–1022 (DNFFSGSSIS). The helical transmembrane segment at 1023–1043 (SILYSQTAFAIFHYSLIVAFA) threads the bilayer. Residues 1044-1072 (SYEIDIPYKFIRNFPYIYQLARRKYFLNN) lie on the Cytoplasmic side of the membrane. The helical transmembrane segment at 1073–1093 (TIIFLNIVESIFSSFISYYIL) threads the bilayer. At 1094–1105 (RGNLFNLITHRK) the chain is on the extracellular side. Residues 1106–1126 (FTFHIFVLNFFLISEKILLFS) form a helical membrane-spanning segment. At 1127–1130 (KTWH) the chain is on the cytoplasmic side. A helical transmembrane segment spans residues 1131–1151 (IFFFIMTIIIVSILFIYINIY). Residues 1152 to 1171 (TLVDCLITGKCEFSLFDPED) lie on the Extracellular side of the membrane. Residues 1172–1192 (SYFWISLLPILYINFIIDKFM) traverse the membrane as a helical segment. Topologically, residues 1193–1297 (KFVKNKIYPD…YEKRNKLKLR (105 aa)) are cytoplasmic. Residues 1298 to 1318 (IIILLLFIIFLITFTIQIIIS) traverse the membrane as a helical segment. Residues 1319-1327 (KFIEKKLHS) are Extracellular-facing. A helical transmembrane segment spans residues 1328–1348 (LSYLTVIYYIVAVLYLIKILI). Over 1349-1353 (RNKTN) the chain is Cytoplasmic. The chain crosses the membrane as a helical span at residues 1354–1374 (YTYFYIIGKLLLVIGYLLEIS). The Extracellular portion of the chain corresponds to 1375 to 1394 (ENSVNNIINMLVTYSFTVCY). Residues 1395-1415 (IFFISFKILEGLVMCIIILSI) traverse the membrane as a helical segment. Over 1416-1457 (AIWVYYHKNNNLNAMCTDFCDNPYTSLDNLEYINISCICKQQ) the chain is Cytoplasmic. A helical transmembrane segment spans residues 1458–1478 (IFTFLICTLSFTLICLFMKYY). Residues 1479–1500 (EIYYLKKKFLTRYKQKVNLGKQ) lie on the Extracellular side of the membrane. Residues 1501–1521 (IEILHTMLPSFLVEYLLVSDP) traverse the membrane as a helical segment. Over 1522-2563 (KADGIMVGKN…EIINIDLTKK (1042 aa)) the chain is Cytoplasmic. In terms of domain architecture, Guanylate cyclase 1 spans 1541–1696 (SVIFCDIDDF…DTVNTASRMK (156 aa)). A compositionally biased stretch (polar residues) spans 2463–2476 (TMSNSKSGQTNITT). Residues 2463-2491 (TMSNSKSGQTNITTDNKKSQIKKNGDVNK) form a disordered region. Over residues 2477–2488 (DNKKSQIKKNGD) the composition is skewed to basic and acidic residues. The helical transmembrane segment at 2564-2584 (LIIIFVISELILSLCNVIELS) threads the bilayer. Residues 2585–2594 (YYENKETPND) lie on the Extracellular side of the membrane. The chain crosses the membrane as a helical span at residues 2595–2615 (FIVIIWLIRSIYLFTITFIWL). Residues 2616–2634 (LLKTKLKEYKDNSSKMMWT) are Cytoplasmic-facing. A helical transmembrane segment spans residues 2635-2655 (TFILNIFLSSWGIIMIDLACI). At 2656 to 2667 (HYSNLVGNSRER) the chain is on the extracellular side. The helical transmembrane segment at 2668–2688 (SIFFMKDATELIISMQLIFVK) threads the bilayer. At 2689–2695 (NMLFKHK) the chain is on the cytoplasmic side. The chain crosses the membrane as a helical span at residues 2696–2716 (FFFFVFFFVFLMYSFFKLFVI). Topologically, residues 2717 to 2722 (HVCELR) are extracellular. The chain crosses the membrane as a helical span at residues 2723-2743 (ICCSILLILSINILYFWYSEY). The Cytoplasmic portion of the chain corresponds to 2744 to 3004 (LDRTQYIIKR…KLREQNKVKG (261 aa)). The Guanylate cyclase 2 domain maps to 2793–2927 (AFLFADIVGF…LDVLIANHIE (135 aa)). 3 residues coordinate Mg(2+): aspartate 2798, isoleucine 2799, and aspartate 2842.

It in the N-terminal section; belongs to the cation transport ATPase (P-type) (TC 3.A.3) family. Type IV subfamily. In the C-terminal section; belongs to the adenylyl cyclase class-4/guanylyl cyclase family. It depends on Mg(2+) as a cofactor. Mn(2+) serves as cofactor.

The protein localises to the membrane. The catalysed reaction is GTP = 3',5'-cyclic GMP + diphosphate. Catalyzes the synthesis of the second messenger cGMP from GTP. Probably by regulating cGMP production, required for ookinete gliding motility, which is necessary for the ookinete to traverse the midgut epithelium of the mosquito. This Plasmodium berghei (strain Anka) protein is Guanylate cyclase beta.